The sequence spans 335 residues: Foldase protein PrsA (335 aa).

The signal sequence occupies residues 1–20 (MKKKIFAGAVTLLSVAVLAA). A lipid anchor (N-palmitoyl cysteine) is attached at Cys-21. Cys-21 carries S-diacylglycerol cysteine lipidation. The PpiC domain maps to 142 to 239 (TPEVTAQIIK…ASYYIVKLVK (98 aa)). The interval 300–335 (TGSSTSSSSAASSSKTSESSSAAESSSKEASSSAAE) is disordered. Positions 302–335 (SSTSSSSAASSSKTSESSSAAESSSKEASSSAAE) are enriched in low complexity.

The protein belongs to the PrsA family.

Its subcellular location is the cell membrane. The catalysed reaction is [protein]-peptidylproline (omega=180) = [protein]-peptidylproline (omega=0). Plays a major role in protein secretion by helping the post-translocational extracellular folding of several secreted proteins. This chain is Foldase protein PrsA, found in Streptococcus sanguinis (strain SK36).